We begin with the raw amino-acid sequence, 65 residues long: Large ribosomal subunit protein bL35c (65 aa).

The disordered stretch occupies residues 18-50 (SSGKILRHKASKSHLLQKKSSKHRRHLSSTCQV). The span at 22-44 (ILRHKASKSHLLQKKSSKHRRHL) shows a compositional bias: basic residues.

It belongs to the bacterial ribosomal protein bL35 family.

Its subcellular location is the plastid. It localises to the chloroplast. The protein is Large ribosomal subunit protein bL35c of Porphyra purpurea (Red seaweed).